Here is a 143-residue protein sequence, read N- to C-terminus: ATP synthase subunit b' (143 aa).

Residues 6–26 (ATLPLMALQFLVLAVVLNAVF) form a helical membrane-spanning segment.

It belongs to the ATPase B chain family. F-type ATPases have 2 components, F(1) - the catalytic core - and F(0) - the membrane proton channel. F(1) has five subunits: alpha(3), beta(3), gamma(1), delta(1), epsilon(1). F(0) has four main subunits: a(1), b(1), b'(1) and c(10-14). The alpha and beta chains form an alternating ring which encloses part of the gamma chain. F(1) is attached to F(0) by a central stalk formed by the gamma and epsilon chains, while a peripheral stalk is formed by the delta, b and b' chains.

It localises to the cellular thylakoid membrane. In terms of biological role, f(1)F(0) ATP synthase produces ATP from ADP in the presence of a proton or sodium gradient. F-type ATPases consist of two structural domains, F(1) containing the extramembraneous catalytic core and F(0) containing the membrane proton channel, linked together by a central stalk and a peripheral stalk. During catalysis, ATP synthesis in the catalytic domain of F(1) is coupled via a rotary mechanism of the central stalk subunits to proton translocation. Its function is as follows. Component of the F(0) channel, it forms part of the peripheral stalk, linking F(1) to F(0). The b'-subunit is a diverged and duplicated form of b found in plants and photosynthetic bacteria. This is ATP synthase subunit b' from Gloeothece citriformis (strain PCC 7424) (Cyanothece sp. (strain PCC 7424)).